Here is a 137-residue protein sequence, read N- to C-terminus: 1,4-dihydroxy-2-naphthoyl-CoA hydrolase (137 aa).

Residue Asp12 is part of the active site.

It belongs to the 4-hydroxybenzoyl-CoA thioesterase family. DHNA-CoA hydrolase subfamily.

The catalysed reaction is 1,4-dihydroxy-2-naphthoyl-CoA + H2O = 1,4-dihydroxy-2-naphthoate + CoA + H(+). Its pathway is cofactor biosynthesis; phylloquinone biosynthesis. The protein operates within quinol/quinone metabolism; 1,4-dihydroxy-2-naphthoate biosynthesis; 1,4-dihydroxy-2-naphthoate from chorismate: step 7/7. In terms of biological role, catalyzes the hydrolysis of 1,4-dihydroxy-2-naphthoyl-CoA (DHNA-CoA) to 1,4-dihydroxy-2-naphthoate (DHNA), a reaction involved in phylloquinone (vitamin K1) biosynthesis. The protein is 1,4-dihydroxy-2-naphthoyl-CoA hydrolase of Acaryochloris marina (strain MBIC 11017).